The following is a 272-amino-acid chain: ATP synthase subunit a (272 aa).

A run of 6 helical transmembrane segments spans residues 41-61 (VLNI…LSIF), 110-130 (FVWV…FPFI), 143-165 (VPSA…ILFY), 188-208 (VFFI…PISL), 222-242 (IFIL…NVPW), and 243-263 (AIFH…LTIV).

It belongs to the ATPase A chain family. F-type ATPases have 2 components, CF(1) - the catalytic core - and CF(0) - the membrane proton channel. CF(1) has five subunits: alpha(3), beta(3), gamma(1), delta(1), epsilon(1). CF(0) has three main subunits: a(1), b(2) and c(9-12). The alpha and beta chains form an alternating ring which encloses part of the gamma chain. CF(1) is attached to CF(0) by a central stalk formed by the gamma and epsilon chains, while a peripheral stalk is formed by the delta and b chains.

Its subcellular location is the cell membrane. In terms of biological role, key component of the proton channel; it plays a direct role in the translocation of protons across the membrane. This chain is ATP synthase subunit a, found in Buchnera aphidicola subsp. Schizaphis graminum (strain Sg).